Here is a 371-residue protein sequence, read N- to C-terminus: Methylthioribose-1-phosphate isomerase (371 aa).

Residues 53–55 (RGA), R90, and Q203 each bind substrate. D243 serves as the catalytic Proton donor. 253-254 (NK) is a binding site for substrate.

This sequence belongs to the eIF-2B alpha/beta/delta subunits family. MtnA subfamily.

The catalysed reaction is 5-(methylsulfanyl)-alpha-D-ribose 1-phosphate = 5-(methylsulfanyl)-D-ribulose 1-phosphate. It carries out the reaction 5-deoxy-alpha-D-ribose 1-phosphate = 5-deoxy-D-ribulose 1-phosphate. It functions in the pathway amino-acid biosynthesis; L-methionine biosynthesis via salvage pathway; L-methionine from S-methyl-5-thio-alpha-D-ribose 1-phosphate: step 1/6. Catalyzes the interconversion of methylthioribose-1-phosphate (MTR-1-P) into methylthioribulose-1-phosphate (MTRu-1-P). Also catalyzes the interconversion of 5-deoxyribose 1-phosphate and 5-deoxyribulose 1-phosphate. Part of a bifunctional DHAP-shunt salvage pathway for SAM by-products. The polypeptide is Methylthioribose-1-phosphate isomerase (Escherichia coli O45:K1 (strain S88 / ExPEC)).